Here is a 319-residue protein sequence, read N- to C-terminus: Dehydrogenase/reductase SDR family member 9 (319 aa).

An N-terminal signal peptide occupies residues 1–20 (MLFWLLALLFLCAFLWNYKG). Residues 34–58 (ITGC…RVIA) and D83 each bind NAD(+). Substrate is bound at residue S164. The active-site Proton acceptor is the Y176. An NAD(+)-binding site is contributed by K180.

This sequence belongs to the short-chain dehydrogenases/reductases (SDR) family. In terms of assembly, homotetramer.

The protein localises to the microsome membrane. The protein resides in the endoplasmic reticulum membrane. The enzyme catalyses 3beta-hydroxy-5alpha-pregnane-20-one + NAD(+) = 5alpha-pregnane-3,20-dione + NADH + H(+). It carries out the reaction 17beta-hydroxy-5alpha-androstan-3-one + NAD(+) = 5alpha-androstan-3,17-dione + NADH + H(+). The catalysed reaction is androsterone + NAD(+) = 5alpha-androstan-3,17-dione + NADH + H(+). It catalyses the reaction 5alpha-androstane-3alpha,17beta-diol + NAD(+) = 17beta-hydroxy-5alpha-androstan-3-one + NADH + H(+). The enzyme catalyses all-trans-retinol + NAD(+) = all-trans-retinal + NADH + H(+). It carries out the reaction 3alpha-hydroxy-5alpha-pregnan-20-one + NAD(+) = 5alpha-pregnane-3,20-dione + NADH + H(+). 3-alpha-hydroxysteroid dehydrogenase that converts 3-alpha-tetrahydroprogesterone (allopregnanolone) to dihydroxyprogesterone and 3-alpha-androstanediol to dihydroxyprogesterone. Also plays a role in the biosynthesis of retinoic acid. Can utilize both NADH and NADPH. The polypeptide is Dehydrogenase/reductase SDR family member 9 (Dhrs9) (Mus musculus (Mouse)).